The following is a 3412-amino-acid chain: Genome polyprotein (3412 aa).

The Cytoplasmic portion of the chain corresponds to 1–104 (MSGRKAQGKT…LSSRKRRSNE (104 aa)). The tract at residues 38-72 (PGPSRGVQGFIFFFLFNILTGKKLTTHLKRLWRML) is hydrophobic; homodimerization of capsid protein C. A propeptide spans 102-121 (SNEMAMMPLLILSMVILAGG) (ER anchor for the capsid protein C, removed in mature form by serine protease NS3). Residues 105 to 125 (MAMMPLLILSMVILAGGVTLV) form a helical membrane-spanning segment. Topologically, residues 126–244 (RKNRWLLLNV…GERQLQKIER (119 aa)) are extracellular. Asparagine 134 and asparagine 150 each carry an N-linked (GlcNAc...) asparagine; by host glycan. Residues 245–265 (WLVRNPFFAITALAIAYLVGN) traverse the membrane as a helical segment. At 266–270 (NMTQR) the chain is on the cytoplasmic side. The helical transmembrane segment at 271-285 (VVIALLVLAVGPAYS) threads the bilayer. The Extracellular portion of the chain corresponds to 286–730 (AHCIGITDRD…TVFGSAFQGL (445 aa)). Cystine bridges form between cysteine 288/cysteine 315, cysteine 345/cysteine 401, cysteine 345/cysteine 406, cysteine 359/cysteine 390, cysteine 377/cysteine 401, cysteine 377/cysteine 406, cysteine 467/cysteine 568, and cysteine 585/cysteine 615. Residues 383 to 396 (DRGWGNGCGLFGKG) form a fusion peptide region. The helical transmembrane segment at 731–751 (FGGLSWITKVIMGAVLIWVGI) threads the bilayer. The Extracellular segment spans residues 752–757 (NTRNMT). A helical transmembrane segment spans residues 758-778 (MSMSMILVGVIMMFLSLGVGA). The Extracellular portion of the chain corresponds to 779-1132 (DQGCAVNFGK…LVRSWVTAGE (354 aa)). Intrachain disulfides connect cysteine 782-cysteine 793, cysteine 833-cysteine 921, cysteine 957-cysteine 1002, cysteine 1058-cysteine 1107, cysteine 1069-cysteine 1091, and cysteine 1090-cysteine 1094. Asparagine 908 and asparagine 986 each carry an N-linked (GlcNAc...) asparagine; by host glycan. Residues 1133–1153 (VHAVPFGLVSMMIAMEVVLRK) form a helical membrane-spanning segment. Residues 1154–1201 (RQGPKQMLVGGIILLGAMLVGQVTVLDLVKLIVAVGLHFHEINNGGDA) are Cytoplasmic-facing. A helical transmembrane segment spans residues 1202–1222 (MYMALIASFSIRPGLLVGFGL). Residues 1223–1287 (RTLWSPRERL…VLPLMALLTP (65 aa)) lie on the Lumenal side of the membrane. A helical transmembrane segment spans residues 1288–1308 (VTMHEVRMATMLFCTVVIVGV). At 1309-1355 (LHQNAKDTSMQKTIPIVALTLTSYMGLTQPFLGLCAYMSTQVFGRRS) the chain is on the cytoplasmic side. Residues 1356-1376 (IPVNEALAAAGLVGVLAGLAF) form a helical membrane-spanning segment. The Lumenal portion of the chain corresponds to 1377-1378 (QD). The chain crosses the membrane as a helical span at residues 1379–1399 (MENFLGPIAVGGILMMLVSVA). Topologically, residues 1400 to 1456 (GKVDGLELKKLGEVSWEEEAEISGSSSRYDVALSEQGEFKLLSEDKVPWDQIVMTSL) are cytoplasmic. Residues 1407–1446 (LKKLGEVSWEEEAEISGSSSRYDVALSEQGEFKLLSEDKV) are interacts with and activates NS3 protease. The segment at residues 1457 to 1477 (ALVGAAIHPFALLLVLGGWVL) is an intramembrane region (helical). Over 1478-2157 (HIKGARRSGD…RNALSMMPEA (680 aa)) the chain is Cytoplasmic. One can recognise a Peptidase S7 domain in the interval 1485 to 1665 (SGDVLWDIPT…EVKEESKEEL (181 aa)). Active-site charge relay system; for serine protease NS3 activity residues include histidine 1537, aspartate 1561, and serine 1622. One can recognise a Helicase ATP-binding domain in the interval 1669–1825 (PTMLKKGMTT…HSNGEIEDVQ (157 aa)). The interval 1673 to 1676 (KKGM) is important for RNA-binding. Residue 1682–1689 (FHPGAGKT) coordinates ATP. Residues 1773–1776 (DEAH) carry the DEAH box motif. The Helicase C-terminal domain occupies 1820 to 1997 (EIEDVQTDIP…VRGGMVAPLY (178 aa)). Lysine 1877 is subject to N6-acetyllysine; by host. Residues 1942 to 1961 (AAQRRGRIGRNPNRDGDSYY) form a disordered region. Residues 2158–2178 (MTIVMLFILAGLLTSGMVIFF) form a helical membrane-spanning segment. Residues 2179 to 2186 (MSPKGMSR) are Lumenal-facing. Positions 2187–2207 (MSMAMGTMAGSGYLMFLGGVK) form an intramembrane region, helical. The Lumenal portion of the chain corresponds to 2208–2209 (PT). A helical membrane pass occupies residues 2210 to 2230 (HISYVMLIFFVLMVVIIPEPG). Topologically, residues 2231 to 2241 (QQRTIQDNQVA) are cytoplasmic. Residues 2242–2262 (YLIIGILTLLSIVAANELGML) form a helical membrane-spanning segment. Residues 2263 to 2293 (EKTKEDFFGRRNIATSGGTIPWSWPDLDLKP) lie on the Lumenal side of the membrane. Residues 2294–2314 (GAAWTVYVGIVTMLSPMLHHW) constitute an intramembrane region (helical). The Lumenal portion of the chain corresponds to 2315-2360 (IKVEYGNLSLSGIAQSASVLSFMDKGIPFMKMNISVVILLVSGWNS). Residues 2361–2380 (ITVIPLLCGVGGAMLHWTLI) form a helical membrane-spanning segment. The Cytoplasmic portion of the chain corresponds to 2381-2421 (LPGIKAQQSKLAQKRVFHGVAKNPVVDGNPTADIEEAPEMP). Residues 2422-2442 (ALYEKKLALYLLLALSLMSVA) form a helical membrane-spanning segment. Residues 2443–2445 (MCR) are Lumenal-facing. The chain crosses the membrane as a helical span at residues 2446 to 2466 (TPFSLAEGIVLSSAALGPLIE). The Cytoplasmic segment spans residues 2467-3411 (GNTSLLWNGP…VDADLQPGEL (945 aa)). In terms of domain architecture, mRNA cap 0-1 NS5-type MT spans 2508-2772 (GSASGKTLGE…DVILPIGTRS (265 aa)). Serine 2563 serves as a coordination point for S-adenosyl-L-methionine. Serine 2563 is subject to Phosphoserine. Lysine 2568 serves as the catalytic For 2'-O-MTase activity. S-adenosyl-L-methionine-binding residues include glycine 2593, tryptophan 2594, threonine 2611, leucine 2612, aspartate 2638, and isoleucine 2639. Aspartate 2653 acts as the For 2'-O-MTase activity in catalysis. Isoleucine 2654 serves as a coordination point for S-adenosyl-L-methionine. Active-site for 2'-O-MTase activity residues include lysine 2689 and glutamate 2725. Tyrosine 2727 provides a ligand contact to S-adenosyl-L-methionine. Positions 2879 to 2912 (RKIMKVVNRWLFRHLAREKNPRLCTKEEFIAKVR) match the Nuclear localization signal motif. Zn(2+) contacts are provided by glutamate 2946, histidine 2950, cysteine 2955, and cysteine 2958. The 153-residue stretch at 3036 to 3188 (GGFYADDTAG…RPVDDRFGLA (153 aa)) folds into the RdRp catalytic domain. Zn(2+)-binding residues include histidine 3223, cysteine 3239, and cysteine 3358.

It in the N-terminal section; belongs to the class I-like SAM-binding methyltransferase superfamily. mRNA cap 0-1 NS5-type methyltransferase family. As to quaternary structure, homodimer. Interacts (via N-terminus) with host EXOC1 (via C-terminus); this interaction results in EXOC1 degradation through the proteasome degradation pathway. In terms of assembly, forms heterodimers with envelope protein E in the endoplasmic reticulum and Golgi. Homodimer; in the endoplasmic reticulum and Golgi. Interacts with protein prM. Interacts with non-structural protein 1. As to quaternary structure, homodimer; Homohexamer when secreted. Interacts with envelope protein E. In terms of assembly, interacts (via N-terminus) with serine protease NS3. Forms a heterodimer with serine protease NS3. May form homooligomers. As to quaternary structure, forms a heterodimer with NS2B. Interacts with non-structural protein 2A (via N-terminus). Interacts with NS4B. Interacts with unphosphorylated RNA-directed RNA polymerase NS5; this interaction stimulates RNA-directed RNA polymerase NS5 guanylyltransferase activity. NS3 interacts with host PDCD6IP; this interaction contributes to virion release. In terms of assembly, interacts with serine protease NS3. Homodimer. Interacts with host STAT2; this interaction prevents the establishment of cellular antiviral state. Interacts with serine protease NS3. Interacts with host TRIM23; this interaction leads to NS5 ubiquitination. Post-translationally, specific enzymatic cleavages in vivo yield mature proteins. The nascent capsid protein C contains a C-terminal hydrophobic domain that act as a signal sequence for translocation of prM into the lumen of the ER. Mature capsid protein C is cleaved at a site upstream of this hydrophobic domain by NS3. prM is cleaved in post-Golgi vesicles by a host furin, releasing the mature small envelope protein M, and peptide pr. Non-structural protein 2A-alpha, a C-terminally truncated form of non-structural protein 2A, results from partial cleavage by NS3. Specific enzymatic cleavages in vivo yield mature proteins peptide 2K acts as a signal sequence and is removed from the N-terminus of NS4B by the host signal peptidase in the ER lumen. Signal cleavage at the 2K-4B site requires a prior NS3 protease-mediated cleavage at the 4A-2K site. Cleaved in post-Golgi vesicles by a host furin, releasing the mature small envelope protein M, and peptide pr. This cleavage is incomplete as up to 30% of viral particles still carry uncleaved prM. In terms of processing, N-glycosylated. Post-translationally, N-glycosylated. The excreted form is glycosylated and this is required for efficient secretion of the protein from infected cells. Polyubiquitinated; ubiquitination is probably mediated by host TRIM23 and is prerequisite for NS5-STAT2 interaction. NS5 is not ISGylated or sumoylated. In terms of processing, acetylated by host KAT5. Acetylation modulates NS3 RNA-binding and unwinding activities and plays an important positive role for viral replication. Post-translationally, phosphorylated on serines residues. This phosphorylation may trigger NS5 nuclear localization.

Its subcellular location is the virion. It localises to the host nucleus. The protein localises to the host cytoplasm. The protein resides in the host perinuclear region. It is found in the secreted. Its subcellular location is the virion membrane. It localises to the host endoplasmic reticulum membrane. It carries out the reaction Selective hydrolysis of -Xaa-Xaa-|-Yaa- bonds in which each of the Xaa can be either Arg or Lys and Yaa can be either Ser or Ala.. The catalysed reaction is RNA(n) + a ribonucleoside 5'-triphosphate = RNA(n+1) + diphosphate. It catalyses the reaction a ribonucleoside 5'-triphosphate + H2O = a ribonucleoside 5'-diphosphate + phosphate + H(+). The enzyme catalyses ATP + H2O = ADP + phosphate + H(+). It carries out the reaction a 5'-end (5'-triphosphoguanosine)-ribonucleoside in mRNA + S-adenosyl-L-methionine = a 5'-end (N(7)-methyl 5'-triphosphoguanosine)-ribonucleoside in mRNA + S-adenosyl-L-homocysteine. The catalysed reaction is a 5'-end (N(7)-methyl 5'-triphosphoguanosine)-ribonucleoside in mRNA + S-adenosyl-L-methionine = a 5'-end (N(7)-methyl 5'-triphosphoguanosine)-(2'-O-methyl-ribonucleoside) in mRNA + S-adenosyl-L-homocysteine + H(+). Functionally, plays a role in virus budding by binding to the cell membrane and gathering the viral RNA into a nucleocapsid that forms the core of a mature virus particle. During virus entry, may induce genome penetration into the host cytoplasm after hemifusion induced by the surface proteins. Can migrate to the cell nucleus where it modulates host functions. Inhibits RNA silencing by interfering with host Dicer. Its function is as follows. Prevents premature fusion activity of envelope proteins in trans-Golgi by binding to envelope protein E at pH6.0. After virion release in extracellular space, gets dissociated from E dimers. In terms of biological role, acts as a chaperone for envelope protein E during intracellular virion assembly by masking and inactivating envelope protein E fusion peptide. prM is the only viral peptide matured by host furin in the trans-Golgi network probably to avoid catastrophic activation of the viral fusion activity in acidic Golgi compartment prior to virion release. prM-E cleavage is inefficient, and many virions are only partially matured. These uncleaved prM would play a role in immune evasion. Functionally, may play a role in virus budding. Exerts cytotoxic effects by activating a mitochondrial apoptotic pathway through M ectodomain. May display a viroporin activity. Binds to host cell surface receptor and mediates fusion between viral and cellular membranes. Envelope protein is synthesized in the endoplasmic reticulum in the form of heterodimer with protein prM. They play a role in virion budding in the ER, and the newly formed immature particle is covered with 60 spikes composed of heterodimer between precursor prM and envelope protein E. The virion is transported to the Golgi apparatus where the low pH causes dissociation of PrM-E heterodimers and formation of E homodimers. prM-E cleavage is inefficient, and many virions are only partially matured. These uncleaved prM would play a role in immune evasion. Its function is as follows. Involved in immune evasion, pathogenesis and viral replication. Once cleaved off the polyprotein, is targeted to three destinations: the viral replication cycle, the plasma membrane and the extracellular compartment. Essential for viral replication. Required for formation of the replication complex and recruitment of other non-structural proteins to the ER-derived membrane structures. Excreted as a hexameric lipoparticle that plays a role against host immune response. Antagonizing the complement function. Binds to the host macrophages and dendritic cells. Inhibits signal transduction originating from Toll-like receptor 3 (TLR3). In terms of biological role, component of the viral RNA replication complex that functions in virion assembly and antagonizes the host immune response. Functionally, required cofactor for the serine protease function of NS3. May have membrane-destabilizing activity and form viroporins. Displays three enzymatic activities: serine protease, NTPase and RNA helicase. NS3 serine protease, in association with NS2B, performs its autocleavage and cleaves the polyprotein at dibasic sites in the cytoplasm: C-prM, NS2A-NS2B, NS2B-NS3, NS3-NS4A, NS4A-2K and NS4B-NS5. NS3 RNA helicase binds RNA and unwinds dsRNA in the 3' to 5' direction. Also plays a role in virus assembly. Its function is as follows. Regulates the ATPase activity of the NS3 helicase activity. NS4A allows NS3 helicase to conserve energy during unwinding. In terms of biological role, functions as a signal peptide for NS4B and is required for the interferon antagonism activity of the latter. Functionally, induces the formation of ER-derived membrane vesicles where the viral replication takes place. Inhibits interferon (IFN)-induced host STAT1 phosphorylation and nuclear translocation, thereby preventing the establishment of cellular antiviral state by blocking the IFN-alpha/beta pathway. Replicates the viral (+) and (-) RNA genome, and performs the capping of genomes in the cytoplasm. NS5 methylates viral RNA cap at guanine N-7 and ribose 2'-O positions. Besides its role in RNA genome replication, also prevents the establishment of cellular antiviral state by blocking the interferon-alpha/beta (IFN-alpha/beta) signaling pathway. IFN-I induces binding of NS5 to host IFN-activated transcription factor STAT2, preventing its transcriptional activity. Host TRIM23 is the E3 ligase that interacts with and polyubiquitinates NS5 to promote its binding to STAT2 and trigger IFN-I signaling inhibition. This is Genome polyprotein from Yellow fever virus (isolate Ethiopia/Couma/1961) (YFV).